The following is a 991-amino-acid chain: YENDEEYESGIDEKKQEKAALAQPTLDTADDGFSFTPASSTQSTPSISTLSDTISHDGQTSDPITKAVRETIIQPQKDEIAEQILKDLAALVDRDLAEQKRKEIEEEKEKNKTLSAFFGNPANRELIDKALEKPELKKKLEAIEIAGLKNVFLTYIAANGYSGGFKPVQWENQISASDLRATVVKNDAGDELCTLNETTVKTKPFTVAKQDGTQVQINSYREIDFPIKLDKADGSMHLSMVALKADGTKPSKDKAVYFTAHYEEGPNGKPQLKEISSPKPLKFAGDGPDAVAYIEHGGEIYTLAVTRGKYKEMMKEVELHQGQSVDLSQTIAKDLTKVQGRSQETLQPIITPNQELKSSIETPTTTQVPPITPDSQPLQTETAQMPQSQQVNPNLLNAATALSGSMQDLLNYVNAGLTKEKDGNTQIDLINAAATAILNNEKEKQANIIVLTENTVNNNALTPDTKVAGVNAVLENIKNNQNTPDLEKSKMLEATVAIALNSENLAPKQKQQMLEKAVDVGLNLKDDTSRAVAIDGITDTVIKSNLSTKDKGTMLIAVGDKVNASELSNAEKQQLLGSVLKKGVETQVLSPEQQQLMQQHLDKITAEQTKNAKITEVQGILANPAFNTIAKTEAIQNVTTKVLDSPIKAEIKGETLESITKVVAESPLNGQDKVDIVKGMGEAIASHKTMSPTEKISAIESVETGVAESITALEDKKLMTKGLVDGIYEDKANPEMTKAVSRGVDKSTARPEDKQALKDAASEVALDRETQNFTKGLKEQNLEKPKPRDDIYNKAQDVAEALKNVITPVLDAHPEKREVSEEEVMKKTSSILNDISNLTIEKVNNFRAMLSPDSNLKTLEEKKAEATKKVDELVKEFGTKSSTEEQQSFIKANLTDDKTLSKEVRLQTIDKLLQEQAQKRAKAIENPNVKTEDVRVVSEQSELKPISNDEPGIEKTKMVVGRDRVNIKDNIKIIGALMNARDSIIQSENLP.

Residues 1-10 (YENDEEYESG) are compositionally biased toward acidic residues. Disordered stretches follow at residues 1 to 63 (YEND…TSDP) and 738 to 789 (KAVS…KPRD). The segment covering 36–63 (TPASSTQSTPSISTLSDTISHDGQTSDP) has biased composition (polar residues). Residues 743–789 (GVDKSTARPEDKQALKDAASEVALDRETQNFTKGLKEQNLEKPKPRD) are compositionally biased toward basic and acidic residues.

The protein resides in the cytoplasm. The chain is Antigenic heat-stable 120 kDa protein (sca4) from Rickettsia australis.